Consider the following 595-residue polypeptide: Mitoguardin 1 (595 aa).

2 helical membrane passes run 11 to 31 (LPIK…YYSL) and 38 to 58 (TGTK…IIIA).

This sequence belongs to the mitoguardin family. Homodimer and heterodimer; forms heterodimers with miga2.

Its subcellular location is the mitochondrion outer membrane. Its function is as follows. Regulator of mitochondrial fusion: acts by forming homo- and heterodimers at the mitochondrial outer membrane and facilitating the formation of pld6/MitoPLD dimers. May act by regulating phospholipid metabolism via pld6/MitoPLD. This is Mitoguardin 1 from Danio rerio (Zebrafish).